A 130-amino-acid polypeptide reads, in one-letter code: Arsenate reductase 2.2 (130 aa).

The region spanning 18-119 is the Rhodanese domain; that stretch reads RDPRIAVVDV…WELSGRPVCR (102 aa). Residue Cys70 is the Cysteine persulfide intermediate of the active site.

It catalyses the reaction [glutaredoxin]-dithiol + arsenate + glutathione + H(+) = glutathionyl-S-S-[glutaredoxin] + arsenite + H2O. Functionally, possesses arsenate reductase activity in vitro. Catalyzes the reduction of arsenate [As(V)] to arsenite [As(III)]. May play a role in arsenic retention in roots. Possesses phosphatase activity towards p-nitrophenyl phosphate in vitro. The polypeptide is Arsenate reductase 2.2 (ACR2.2) (Oryza sativa subsp. japonica (Rice)).